Consider the following 1174-residue polypeptide: Carboxylic acid reductase (1174 aa).

Residues histidine 297, serine 392, glutamate 413–glycine 414, threonine 418, aspartate 491, tyrosine 503–arginine 506, lysine 512, and lysine 612 contribute to the AMP site. The 76-residue stretch at alanine 651 to arginine 726 folds into the Carrier domain. The residue at position 685 (serine 685) is an O-(pantetheine 4'-phosphoryl)serine. Residues threonine 787–glycine 791, arginine 814, arginine 824, aspartate 854–lysine 855, proline 880–alanine 882, threonine 919–serine 920, tyrosine 956, and lysine 960 each bind NADP(+).

It belongs to the ATP-dependent AMP-binding enzyme family. Carboxylic acid reductase subfamily. Pantetheine 4'-phosphate serves as cofactor.

The enzyme catalyses a carboxylate + ATP + NADPH + H(+) = an aldehyde + AMP + diphosphate + NADP(+). In terms of biological role, catalyzes the ATP- and NADPH-dependent reduction of carboxylic acids to the corresponding aldehydes. Catalyzes the reduction of a wide range of aliphatic fatty acids (C6-C18) into their corresponding aldehydes. Can also reduce benzoate to benzaldehyde. Has a preference for NADPH over NADH as the electron donor. The polypeptide is Carboxylic acid reductase (Mycobacterium marinum (strain ATCC BAA-535 / M)).